We begin with the raw amino-acid sequence, 275 residues long: Nitrogenase iron protein 3 (275 aa).

9 to 16 (GKGGIGKS) is a binding site for ATP. Cys-97 is a binding site for [4Fe-4S] cluster. Arg-100 is subject to ADP-ribosylarginine; by dinitrogenase reductase ADP-ribosyltransferase. Cys-132 contacts [4Fe-4S] cluster.

The protein belongs to the NifH/BchL/ChlL family. Homodimer. It depends on [4Fe-4S] cluster as a cofactor. In terms of processing, the reversible ADP-ribosylation of Arg-100 inactivates the nitrogenase reductase and regulates nitrogenase activity.

The enzyme catalyses N2 + 8 reduced [2Fe-2S]-[ferredoxin] + 16 ATP + 16 H2O = H2 + 8 oxidized [2Fe-2S]-[ferredoxin] + 2 NH4(+) + 16 ADP + 16 phosphate + 6 H(+). In terms of biological role, the key enzymatic reactions in nitrogen fixation are catalyzed by the nitrogenase complex, which has 2 components: the iron protein (component 2) and a component 1 which is either a molybdenum-iron protein, a vanadium-iron, or an iron-iron protein. The chain is Nitrogenase iron protein 3 (anfH) from Azotobacter vinelandii.